A 328-amino-acid chain; its full sequence is Stress response kinase A (328 aa).

The active-site Proton acceptor is Asp-201. Positions 206 and 217 each coordinate Mg(2+). The active site involves Asp-217.

The protein belongs to the SrkA/RdoA protein kinase family. In terms of assembly, monomer. Requires Mg(2+) as cofactor.

The protein localises to the cytoplasm. It carries out the reaction L-seryl-[protein] + ATP = O-phospho-L-seryl-[protein] + ADP + H(+). The catalysed reaction is L-threonyl-[protein] + ATP = O-phospho-L-threonyl-[protein] + ADP + H(+). In terms of biological role, a protein kinase that phosphorylates Ser and Thr residues. Probably acts to suppress the effects of stress linked to accumulation of reactive oxygen species. Probably involved in the extracytoplasmic stress response. The sequence is that of Stress response kinase A from Salmonella choleraesuis (strain SC-B67).